The primary structure comprises 311 residues: Pantothenate synthetase (311 aa).

Position 43–50 (43–50 (MGALHEGH)) interacts with ATP. H50 functions as the Proton donor in the catalytic mechanism. Q75 serves as a coordination point for (R)-pantoate. Q75 is a binding site for beta-alanine. 161-164 (GEKD) is a binding site for ATP. Q167 serves as a coordination point for (R)-pantoate. ATP-binding positions include V190 and 198–201 (MSSR).

The protein belongs to the pantothenate synthetase family. Homodimer.

Its subcellular location is the cytoplasm. The enzyme catalyses (R)-pantoate + beta-alanine + ATP = (R)-pantothenate + AMP + diphosphate + H(+). Its pathway is cofactor biosynthesis; (R)-pantothenate biosynthesis; (R)-pantothenate from (R)-pantoate and beta-alanine: step 1/1. In terms of biological role, catalyzes the condensation of pantoate with beta-alanine in an ATP-dependent reaction via a pantoyl-adenylate intermediate. The polypeptide is Pantothenate synthetase (Mycolicibacterium vanbaalenii (strain DSM 7251 / JCM 13017 / BCRC 16820 / KCTC 9966 / NRRL B-24157 / PYR-1) (Mycobacterium vanbaalenii)).